Reading from the N-terminus, the 97-residue chain is Large ribosomal subunit protein uL23 (97 aa).

Belongs to the universal ribosomal protein uL23 family. Part of the 50S ribosomal subunit. Contacts protein L29, and trigger factor when it is bound to the ribosome.

One of the early assembly proteins it binds 23S rRNA. One of the proteins that surrounds the polypeptide exit tunnel on the outside of the ribosome. Forms the main docking site for trigger factor binding to the ribosome. This chain is Large ribosomal subunit protein uL23, found in Rhizobium etli (strain CIAT 652).